The sequence spans 390 residues: Calcium-binding and spermatid-specific protein 1 (390 aa).

Disordered stretches follow at residues 1–23 (MAEDGSPKIYSRPPRDSSKTPTE), 82–109 (ASLKSTTLPEKEITTPTETTNSKPKESI), and 146–225 (TIDA…TIPD). Residues 162–174 (ETQEDSSANDEDT) show a composition bias toward acidic residues. Residues 184 to 193 (TDVSSSTSSD) show a composition bias toward low complexity. Residues Ser-251 and Ser-267 each carry the phosphoserine modification. Thr-280 is modified (phosphothreonine; by CK2). Position 312 is a phosphoserine (Ser-312). Residues 330 to 344 (EPHVDTKNSPEKDAA) are compositionally biased toward basic and acidic residues. A disordered region spans residues 330–390 (EPHVDTKNSP…LKEEPDELMM (61 aa)). 4 positions are modified to phosphoserine: Ser-346, Ser-356, Ser-371, and Ser-375. The span at 346–364 (SVTNVTEEFPSVTSVVEQS) shows a compositional bias: polar residues.

Expressed in seminiferous tubules of the testis in step 10 spermatids (stage X), subsequently increasing to reach maximal levels of step 18 elongated spermatids (stage VI) (at protein level). Strongly expressed in testis. Weakly expressed in olfactory epithelium. Expressed in spermatids of seminiferous tubules at steps 4-14 (stages IV to XIV of the seminiferous epithelium classification).

The protein resides in the cytoplasm. It localises to the mitochondrion inner membrane. Its subcellular location is the cell projection. It is found in the cilium. The protein localises to the flagellum. The protein resides in the cytoplasmic vesicle. It localises to the secretory vesicle. Its subcellular location is the acrosome. Functionally, calcium-binding protein. Essential for maintaining the structural integrity of the sperm flagella. This chain is Calcium-binding and spermatid-specific protein 1 (Cabs1), found in Rattus norvegicus (Rat).